A 424-amino-acid chain; its full sequence is Serine--tRNA ligase (424 aa).

Position 232–234 (232–234 (TAE)) interacts with L-serine. 263-265 (RSE) serves as a coordination point for ATP. Glu-286 contributes to the L-serine binding site. 350-353 (EISS) is a binding site for ATP. Residue Ser-385 participates in L-serine binding.

This sequence belongs to the class-II aminoacyl-tRNA synthetase family. Type-1 seryl-tRNA synthetase subfamily. As to quaternary structure, homodimer. The tRNA molecule binds across the dimer.

Its subcellular location is the cytoplasm. It catalyses the reaction tRNA(Ser) + L-serine + ATP = L-seryl-tRNA(Ser) + AMP + diphosphate + H(+). The catalysed reaction is tRNA(Sec) + L-serine + ATP = L-seryl-tRNA(Sec) + AMP + diphosphate + H(+). It participates in aminoacyl-tRNA biosynthesis; selenocysteinyl-tRNA(Sec) biosynthesis; L-seryl-tRNA(Sec) from L-serine and tRNA(Sec): step 1/1. Its function is as follows. Catalyzes the attachment of serine to tRNA(Ser). Is also able to aminoacylate tRNA(Sec) with serine, to form the misacylated tRNA L-seryl-tRNA(Sec), which will be further converted into selenocysteinyl-tRNA(Sec). This chain is Serine--tRNA ligase, found in Latilactobacillus sakei subsp. sakei (strain 23K) (Lactobacillus sakei subsp. sakei).